The sequence spans 155 residues: 6,7-dimethyl-8-ribityllumazine synthase (155 aa).

5-amino-6-(D-ribitylamino)uracil contacts are provided by residues Phe-23, 57–59 (AFE), and 81–83 (AVI). 86–87 (AT) is a binding site for (2S)-2-hydroxy-3-oxobutyl phosphate. The active-site Proton donor is His-89. Phe-114 serves as a coordination point for 5-amino-6-(D-ribitylamino)uracil. Arg-128 lines the (2S)-2-hydroxy-3-oxobutyl phosphate pocket.

Belongs to the DMRL synthase family.

The catalysed reaction is (2S)-2-hydroxy-3-oxobutyl phosphate + 5-amino-6-(D-ribitylamino)uracil = 6,7-dimethyl-8-(1-D-ribityl)lumazine + phosphate + 2 H2O + H(+). It functions in the pathway cofactor biosynthesis; riboflavin biosynthesis; riboflavin from 2-hydroxy-3-oxobutyl phosphate and 5-amino-6-(D-ribitylamino)uracil: step 1/2. In terms of biological role, catalyzes the formation of 6,7-dimethyl-8-ribityllumazine by condensation of 5-amino-6-(D-ribitylamino)uracil with 3,4-dihydroxy-2-butanone 4-phosphate. This is the penultimate step in the biosynthesis of riboflavin. The sequence is that of 6,7-dimethyl-8-ribityllumazine synthase from Geotalea daltonii (strain DSM 22248 / JCM 15807 / FRC-32) (Geobacter daltonii).